The chain runs to 437 residues: Elongation factor 1-gamma (437 aa).

A2 bears the N-acetylalanine mark. The GST N-terminal domain maps to 2-87 (AAGTLYTYPE…YVSNEELRGS (86 aa)). Residues 88-216 (TPEAAAQVVQ…VKLCEKMAQF (129 aa)) enclose the GST C-terminal domain. Residues K147 and K212 each carry the N6-acetyllysine modification. The segment covering 221–254 (FAESQPKKDTPRKEKGSREEKQKPQTERKEEKKA) has biased composition (basic and acidic residues). Residues 221–268 (FAESQPKKDTPRKEKGSREEKQKPQTERKEEKKAAAPAPEEEMDECEQ) form a disordered region. K253 participates in a covalent cross-link: Glycyl lysine isopeptide (Lys-Gly) (interchain with G-Cter in SUMO1). One can recognise an EF-1-gamma C-terminal domain in the interval 276-437 (AKDPFAHLPK…KAVNQGKIFK (162 aa)). K285 participates in a covalent cross-link: Glycyl lysine isopeptide (Lys-Gly) (interchain with G-Cter in SUMO2). The residue at position 401 (K401) is an N6-acetyllysine. K434 carries the N6-acetyllysine; alternate modification. At K434 the chain carries N6-malonyllysine; alternate.

EF-1 is composed of four subunits: alpha, beta, delta, and gamma.

Its function is as follows. Probably plays a role in anchoring the complex to other cellular components. The chain is Elongation factor 1-gamma (Eef1g) from Rattus norvegicus (Rat).